A 107-amino-acid polypeptide reads, in one-letter code: Flagellar hook-basal body complex protein FliE (107 aa).

The protein belongs to the FliE family.

It localises to the bacterial flagellum basal body. The sequence is that of Flagellar hook-basal body complex protein FliE from Cupriavidus pinatubonensis (strain JMP 134 / LMG 1197) (Cupriavidus necator (strain JMP 134)).